Reading from the N-terminus, the 748-residue chain is MASELPMFGQGAGVDRAACLPGAERCAGLRGLDLSMDALKQAQAPLRSAPTRPFLPQESPLSMLPCRLDRAADVRRSPVLAGATLIVRRLFIFVGTALLTLAGGYGMYDVVKVGGVTFLEALLLGLFLVLLAWVAFSFMSALAGFFVLLTRRQPNLPIDTTGPLPHVTSRTAMLLPTYNEDPHHVMARLRAMYESIDATGYGEQFDWFLLSDTTDPDIWISEEMAFIELRRACGGDQLYYRHRSDNTARKSGNIADWVTRFGAAYDHMIVLDADSLMEGDTIVRLVHAMERTPSCALIQTQPVIVNARTLFSRLQQFAGRVYGPLITAGNAWWHDGDGNYWGHNAIIRLKAFAAEAGLPELRGRKPFGGHILSHDFVEAALMRRAGWAIYMVPAVRGSFEEVPPSLLDFAGRDRRWCQGNLQHLAVLPTRGLHWVSRLHLLTGIGSYVTAPLWLLFLLVGLLISLQAHFIRPEYFPKGFSLFPTWPQQDPVLAAWVFAATMGLLILPKLLAYLVLISNREERTGFAGSGRVLAGVVCEAFVAALLAPCMMILQTKAVMEILAGRDAGWQVQRRGDGQLARGEVYRKLAGPTLCGLVLSVCAYSVSLPLLLWMSPVVLGLLLSIPLGIMTSLQLSAPGVFATPEINEPPAVVLRANELAAAEPTEMAGALRQLSRDPELLAEHLGSQSPASSRRFGPVDVPLATATAKVARCESLDDVLAWFDKLEMRAVLENPTLLRRILELPAGGRD.

Transmembrane regions (helical) follow at residues 85-107 (LIVR…GYGM), 127-149 (FLVL…FVLL), 443-465 (GIGS…LISL), 494-516 (AWVF…LVLI), 529-551 (GRVL…CMMI), 587-606 (LAGP…SVSL), and 608-630 (LLLW…IMTS).

The protein belongs to the glycosyltransferase 2 family. OpgH subfamily.

The protein localises to the cell inner membrane. It participates in glycan metabolism; osmoregulated periplasmic glucan (OPG) biosynthesis. Involved in the biosynthesis of osmoregulated periplasmic glucans (OPGs). The sequence is that of Glucans biosynthesis glucosyltransferase H from Bradyrhizobium diazoefficiens (strain JCM 10833 / BCRC 13528 / IAM 13628 / NBRC 14792 / USDA 110).